The sequence spans 290 residues: Ribosomal RNA small subunit methyltransferase A (290 aa).

6 residues coordinate S-adenosyl-L-methionine: Asn-27, Leu-29, Gly-54, Glu-75, Asp-100, and Asn-125.

Belongs to the class I-like SAM-binding methyltransferase superfamily. rRNA adenine N(6)-methyltransferase family. RsmA subfamily.

The protein resides in the cytoplasm. The catalysed reaction is adenosine(1518)/adenosine(1519) in 16S rRNA + 4 S-adenosyl-L-methionine = N(6)-dimethyladenosine(1518)/N(6)-dimethyladenosine(1519) in 16S rRNA + 4 S-adenosyl-L-homocysteine + 4 H(+). In terms of biological role, specifically dimethylates two adjacent adenosines (A1518 and A1519) in the loop of a conserved hairpin near the 3'-end of 16S rRNA in the 30S particle. May play a critical role in biogenesis of 30S subunits. This Streptococcus pyogenes serotype M1 protein is Ribosomal RNA small subunit methyltransferase A.